The sequence spans 932 residues: Protocadherin gamma-A7 (932 aa).

The signal sequence occupies residues 1-28 (MAAQPRGGDYRGFFLLSILLGTPWEAWA). Cadherin domains lie at 29-133 (GRIL…VPRF), 134-242 (LTEE…TPVF), 243-347 (SLPQ…APEV), 348-452 (TMTS…PPTF), 453-562 (PHSS…PPEI), and 570-682 (DGST…EPSD). Over 29–692 (GRILYSVSEE…GPYNYDLTLY (664 aa)) the chain is Extracellular. N-linked (GlcNAc...) asparagine glycosylation is found at Asn419 and Asn545. Residues 693 to 713 (LVVAVATVSCVFLAFVLVLLA) form a helical membrane-spanning segment. The Cytoplasmic segment spans residues 714 to 932 (LRLRRWHKSR…KKKSGKKEKK (219 aa)). 2 disordered regions span residues 805 to 841 (PSIQ…WPNN) and 902 to 932 (ATLT…KEKK). Positions 922–932 (NKKKSGKKEKK) are enriched in basic residues.

The protein resides in the cell membrane. Potential calcium-dependent cell-adhesion protein. May be involved in the establishment and maintenance of specific neuronal connections in the brain. The polypeptide is Protocadherin gamma-A7 (PCDHGA7) (Homo sapiens (Human)).